Consider the following 237-residue polypeptide: H/ACA ribonucleoprotein complex subunit 1 (237 aa).

Composition is skewed to gly residues over residues 1-59 (MGFG…GGRG) and 172-237 (RGGG…RGRW). Disordered regions lie at residues 1-64 (MGFG…FDTG) and 157-237 (KPPQ…RGRW). RGG-box stretches follow at residues 4–56 (GKPR…GRGG) and 166–236 (KAFT…GRGR).

Belongs to the GAR1 family. As to quaternary structure, component of the box H/ACA small nucleolar ribonucleoprotein (H/ACA snoRNP) complex consisting of Nop60B, Gar1, NPH2 and Nop10, and associated with H/ACA-type snoRNAs.

The protein resides in the nucleus. It is found in the nucleolus. Component of the box H/ACA small nucleolar ribonucleoprotein (H/ACA snoRNP) complex, which catalyzes pseudouridylation of rRNA. This involves the isomerization of uridine such that the ribose is subsequently attached to C5, instead of the normal N1. Pseudouridine ('psi') residues may serve to stabilize the conformation of rRNAs. Required for ribosome biogenesis. H/ACA snoRNP complex-dependent ribosome biogenesis is important in female germline cell differentiation during oogenesis. This Drosophila melanogaster (Fruit fly) protein is H/ACA ribonucleoprotein complex subunit 1.